Reading from the N-terminus, the 419-residue chain is Multifunctional CCA protein (419 aa).

Positions 8 and 11 each coordinate ATP. Positions 8 and 11 each coordinate CTP. Residues Asp-21 and Asp-23 each contribute to the Mg(2+) site. Residues Arg-91, Arg-137, and Arg-140 each contribute to the ATP site. 3 residues coordinate CTP: Arg-91, Arg-137, and Arg-140. An HD domain is found at 228-334 (SFLHTMLVLQ…IKLFNKLDVW (107 aa)).

Belongs to the tRNA nucleotidyltransferase/poly(A) polymerase family. Bacterial CCA-adding enzyme type 1 subfamily. In terms of assembly, monomer. Can also form homodimers and oligomers. Mg(2+) is required as a cofactor. Requires Ni(2+) as cofactor.

It catalyses the reaction a tRNA precursor + 2 CTP + ATP = a tRNA with a 3' CCA end + 3 diphosphate. It carries out the reaction a tRNA with a 3' CCA end + 2 CTP + ATP = a tRNA with a 3' CCACCA end + 3 diphosphate. Functionally, catalyzes the addition and repair of the essential 3'-terminal CCA sequence in tRNAs without using a nucleic acid template. Adds these three nucleotides in the order of C, C, and A to the tRNA nucleotide-73, using CTP and ATP as substrates and producing inorganic pyrophosphate. tRNA 3'-terminal CCA addition is required both for tRNA processing and repair. Also involved in tRNA surveillance by mediating tandem CCA addition to generate a CCACCA at the 3' terminus of unstable tRNAs. While stable tRNAs receive only 3'-terminal CCA, unstable tRNAs are marked with CCACCA and rapidly degraded. The protein is Multifunctional CCA protein of Mannheimia succiniciproducens (strain KCTC 0769BP / MBEL55E).